An 89-amino-acid polypeptide reads, in one-letter code: Large ribosomal subunit protein bL27 (89 aa).

The disordered stretch occupies residues 1–21 (MAHKKSGGSSSNGRDSESKRL).

The protein belongs to the bacterial ribosomal protein bL27 family.

This Caulobacter vibrioides (strain NA1000 / CB15N) (Caulobacter crescentus) protein is Large ribosomal subunit protein bL27.